We begin with the raw amino-acid sequence, 506 residues long: Probable alpha-L-arabinofuranosidase B (506 aa).

The first 26 residues, 1-26, serve as a signal peptide directing secretion; sequence MSSGLSLERACAVALGIVASASLVAA. A catalytic region spans residues 27-343; it reads GPCDIYSSGG…ADIVAAKYAI (317 aa). Disulfide bonds link Cys29/Cys39, Cys89/Cys94, and Cys184/Cys185. Residue Asn91 is glycosylated (N-linked (GlcNAc...) asparagine). Asp227 provides a ligand contact to substrate. The Nucleophile role is filled by Glu229. Residues Asn230 and Gly304 each coordinate substrate. Catalysis depends on Asp305, which acts as the Proton donor. Positions 344–506 are ABD; sequence ASLTSGPALT…VSWVVSTGFA (163 aa). The cysteines at positions 409 and 447 are disulfide-linked. Substrate contacts are provided by His424, Asn426, Phe427, Asp443, His471, Glu473, Leu476, and Asp496.

This sequence belongs to the glycosyl hydrolase 54 family.

Its subcellular location is the secreted. It catalyses the reaction Hydrolysis of terminal non-reducing alpha-L-arabinofuranoside residues in alpha-L-arabinosides.. Its pathway is glycan metabolism; L-arabinan degradation. Alpha-L-arabinofuranosidase involved in the degradation of arabinoxylan, a major component of plant hemicellulose. Able to hydrolyze 1,5-, 1,3- and 1,2-alpha-linkages not only in L-arabinofuranosyl oligosaccharides, but also in polysaccharides containing terminal non-reducing L-arabinofuranoses in side chains, like L-arabinan, arabinogalactan and arabinoxylan. The protein is Probable alpha-L-arabinofuranosidase B (abfB) of Aspergillus flavus (strain ATCC 200026 / FGSC A1120 / IAM 13836 / NRRL 3357 / JCM 12722 / SRRC 167).